Consider the following 75-residue polypeptide: Small ribosomal subunit protein eS28 (75 aa).

The protein belongs to the eukaryotic ribosomal protein eS28 family.

In Methanococcus aeolicus (strain ATCC BAA-1280 / DSM 17508 / OCM 812 / Nankai-3), this protein is Small ribosomal subunit protein eS28.